A 141-amino-acid polypeptide reads, in one-letter code: Hemoglobin subunit alpha (141 aa).

The Globin domain occupies 1–141 (VLSSKDKTNV…VSTVLTSKYR (141 aa)). Serine 3 carries the phosphoserine modification. Lysine 7 carries the post-translational modification N6-succinyllysine. A Phosphothreonine modification is found at threonine 8. Residue lysine 11 is modified to N6-succinyllysine. Position 16 is an N6-acetyllysine; alternate (lysine 16). An N6-succinyllysine; alternate modification is found at lysine 16. Tyrosine 24 carries the phosphotyrosine modification. Lysine 40 bears the N6-succinyllysine mark. Serine 49 is subject to Phosphoserine. Histidine 58 contacts O2. Position 87 (histidine 87) interacts with heme b. A Phosphoserine modification is found at serine 102. Phosphothreonine is present on threonine 108. Serine 124 bears the Phosphoserine mark. A phosphothreonine mark is found at threonine 134 and threonine 137. Position 138 is a phosphoserine (serine 138).

It belongs to the globin family. As to quaternary structure, heterotetramer of two alpha chains and two beta chains. As to expression, red blood cells.

In terms of biological role, involved in oxygen transport from the lung to the various peripheral tissues. Functionally, hemopressin acts as an antagonist peptide of the cannabinoid receptor CNR1. Hemopressin-binding efficiently blocks cannabinoid receptor CNR1 and subsequent signaling. The sequence is that of Hemoglobin subunit alpha (HBA) from Camelus dromedarius (Dromedary).